Consider the following 425-residue polypeptide: Enolase (425 aa).

Gln162 lines the (2R)-2-phosphoglycerate pocket. Glu204 functions as the Proton donor in the catalytic mechanism. Asp241, Glu282, and Asp309 together coordinate Mg(2+). Lys334, Arg363, Ser364, and Lys385 together coordinate (2R)-2-phosphoglycerate. Residue Lys334 is the Proton acceptor of the active site.

It belongs to the enolase family. The cofactor is Mg(2+).

Its subcellular location is the cytoplasm. It is found in the secreted. The protein resides in the cell surface. The catalysed reaction is (2R)-2-phosphoglycerate = phosphoenolpyruvate + H2O. Its pathway is carbohydrate degradation; glycolysis; pyruvate from D-glyceraldehyde 3-phosphate: step 4/5. In terms of biological role, catalyzes the reversible conversion of 2-phosphoglycerate (2-PG) into phosphoenolpyruvate (PEP). It is essential for the degradation of carbohydrates via glycolysis. This chain is Enolase, found in Corynebacterium diphtheriae (strain ATCC 700971 / NCTC 13129 / Biotype gravis).